The sequence spans 352 residues: Endophilin-A1 (352 aa).

A membrane-binding amphipathic helix region spans residues M1 to V21. Positions M1–T27 are disordered. Residues M1–S125 form a binds and tubulates liposomes region. Positions S18–S249 constitute a BAR domain. The required for dimerization upon membrane association stretch occupies residues P60 to P87. A coiled-coil region spans residues E181–S248. The residue at position 262 (S262) is a Phosphoserine. Positions E264–Q289 are disordered. Positions G268 to G281 are enriched in polar residues. The SH3 domain maps to M290–A349. Residue Y299 is modified to Phosphotyrosine.

It belongs to the endophilin family. As to quaternary structure, monomer; in cytoplasm. Homodimer; when associated with membranes. Interacts with SYNJ1. Interacts with DNM1. Interacts with MAP4K3; the interaction appears to regulate MAP4K3-mediated JNK activation. Interacts with OPHN1. Interacts with PDCD6IP. Interacts with BIN2. Interacts with ATXN2. Interacts with ADAM9 and ADAM15 cytoplasmic tails. Interacts with TMEM108. Interacts with ADGRB2.

The protein localises to the cytoplasm. Its subcellular location is the membrane. It localises to the early endosome. The protein resides in the presynapse. In terms of biological role, implicated in synaptic vesicle endocytosis. May recruit other proteins to membranes with high curvature. Required for BDNF-dependent dendrite outgrowth. Cooperates with SH3GL2 to mediate BDNF-NTRK2 early endocytic trafficking and signaling from early endosomes. This Mus musculus (Mouse) protein is Endophilin-A1 (Sh3gl2).